The following is a 29-amino-acid chain: Cliotide T18 (29 aa).

Residues G1–N29 constitute a cross-link (cyclopeptide (Gly-Asn)). 3 disulfides stabilise this stretch: C5-C19, C9-C21, and C14-C26.

Post-translationally, contains 3 disulfide bonds. This is a cyclic peptide. As to expression, expressed in root nodules but not in seed.

Its function is as follows. Probably participates in a plant defense mechanism. This Clitoria ternatea (Butterfly pea) protein is Cliotide T18.